The following is a 548-amino-acid chain: MTEITVNGMTCTSCATHVKDALEKIPGVNAAVVSYPESRAQVMADTAVSHNQLLAAIAALGYQGSIRVGDFKDEPKIRDALEGAGLHIAIIGSGGAAMAAALKAVEQGATVTLIERGTIGGTCVNIGCVPSKIMIRAAHIAHLRRESPFDGGIAATVPAIDRSKLLAQQQARVDELRHAKYEGILDGNPAITVLHGEARFKDDQSLVVRLNEGGEREVTFDRCLVATGASPAVPPIPGLKESPYWTSTEALVSDTIPARLAVIGSSVVALELAQAFARLGSQVTILARSTLFFREDPAIGEAVTAAFRAEGIEVLEHTQASQVAHVNGEFVLTTGHGELRADKLLVATGRAPNTRSLALDAPGVTVNAQGAIVIDQGMRTSNPNIYAAGDCTDQPQFVYVAAAAGTRAAINMTGGDRALNLTAMPAVVFTDPQVATVGYSEAEAHHDGIETDSRTLTLDNVPRALANFDTRGFIKLVIEEGSGRLIGVQAVAPEAGELIQTAVLAIRNRMTVQELADQLFPYLTMVEGLKLAAQTFNKDVKQLSCCAG.

The HMA domain occupies 1–65; that stretch reads MTEITVNGMT…AIAALGYQGS (65 aa). 2 residues coordinate a metal cation: Cys-11 and Cys-14. Residues Ala-97, Gly-117, and Thr-122 each coordinate FAD. A disulfide bridge connects residues Cys-123 and Cys-128. FAD-binding residues include Lys-132, Ala-198, Asp-390, and Val-398. The Hg(2+) site is built by Cys-545 and Cys-546.

The protein belongs to the class-I pyridine nucleotide-disulfide oxidoreductase family. In terms of assembly, homodimer. Requires FAD as cofactor.

It carries out the reaction Hg + NADP(+) + H(+) = Hg(2+) + NADPH. In terms of biological role, resistance to Hg(2+) in bacteria appears to be governed by a specialized system which includes mercuric reductase. MerA protein is responsible for volatilizing mercury as Hg(0). This Pseudomonas fluorescens protein is Mercuric reductase (merA).